Here is a 211-residue protein sequence, read N- to C-terminus: ATP phosphoribosyltransferase (211 aa).

This sequence belongs to the ATP phosphoribosyltransferase family. Short subfamily. As to quaternary structure, heteromultimer composed of HisG and HisZ subunits.

The protein resides in the cytoplasm. It catalyses the reaction 1-(5-phospho-beta-D-ribosyl)-ATP + diphosphate = 5-phospho-alpha-D-ribose 1-diphosphate + ATP. Its pathway is amino-acid biosynthesis; L-histidine biosynthesis; L-histidine from 5-phospho-alpha-D-ribose 1-diphosphate: step 1/9. Catalyzes the condensation of ATP and 5-phosphoribose 1-diphosphate to form N'-(5'-phosphoribosyl)-ATP (PR-ATP). Has a crucial role in the pathway because the rate of histidine biosynthesis seems to be controlled primarily by regulation of HisG enzymatic activity. This chain is ATP phosphoribosyltransferase, found in Ectopseudomonas mendocina (strain ymp) (Pseudomonas mendocina).